We begin with the raw amino-acid sequence, 62 residues long: Teretoxin Tsu1.1 (62 aa).

Residues 1-21 form the signal peptide; that stretch reads MSCFPVLFVMMLLASQSVWAF. The propeptide occupies 22–40; the sequence is PEPETRIGTARDAESMGVR.

The protein belongs to the teretoxin A (TA) superfamily. In terms of processing, contains 2 disulfide bonds. As to expression, expressed by the venom duct.

The protein localises to the secreted. The protein is Teretoxin Tsu1.1 of Terebra subulata (Chocolate spotted auger).